Consider the following 504-residue polypeptide: Maturase K (504 aa).

The protein belongs to the intron maturase 2 family. MatK subfamily.

The protein resides in the plastid. The protein localises to the chloroplast. Its function is as follows. Usually encoded in the trnK tRNA gene intron. Probably assists in splicing its own and other chloroplast group II introns. The chain is Maturase K from Lupinus argenteus (Silvery lupine).